The primary structure comprises 134 residues: Small ribosomal subunit protein bS16 (134 aa).

Positions 80 to 134 are disordered; sequence GLAKRPTRSNPTKGEPGKKAQERLAMAKQAEEEAAAKAAEAAAAAAAPAEEAASE. Low complexity predominate over residues 115 to 134; that stretch reads AKAAEAAAAAAAPAEEAASE.

The protein belongs to the bacterial ribosomal protein bS16 family.

This chain is Small ribosomal subunit protein bS16, found in Brucella anthropi (strain ATCC 49188 / DSM 6882 / CCUG 24695 / JCM 21032 / LMG 3331 / NBRC 15819 / NCTC 12168 / Alc 37) (Ochrobactrum anthropi).